We begin with the raw amino-acid sequence, 266 residues long: Norfluorocurarine synthase 1 (266 aa).

In terms of domain architecture, AB hydrolase-1 spans 11-121 (HFVLVHGAGH…VMPDAVNPPS (111 aa)). Catalysis depends on residues serine 86, aspartate 216, and histidine 244.

This sequence belongs to the AB hydrolase superfamily. Homodimer.

It catalyses the reaction 17-dehydropreakuammicine + H2O = norfluorocurarine + methanol + CO2. It functions in the pathway alkaloid biosynthesis. Its function is as follows. Hydrolase involved in the biosynthesis of curare monoterpene indole alkaloids (MIAs), natural products such as diaboline, a pharmacologically active compound used to regulate blood pressure. Curare alkaloids act as animal glycine receptor antagonists. Catalyzes the conversion of dehydropreakuammicine to norfluorocurarine. This Strychnos sp protein is Norfluorocurarine synthase 1.